The chain runs to 184 residues: CASP-like protein 1U1 (184 aa).

Topologically, residues M1–S30 are cytoplasmic. The helical transmembrane segment at T31 to I51 threads the bilayer. The Extracellular portion of the chain corresponds to T52–W76. The chain crosses the membrane as a helical span at residues F77–I97. Over S98 to D111 the chain is Cytoplasmic. Residues L112–G132 traverse the membrane as a helical segment. Residues K133–H154 are Extracellular-facing. The chain crosses the membrane as a helical span at residues V155–L175. The Cytoplasmic portion of the chain corresponds to G176–V184.

This sequence belongs to the Casparian strip membrane proteins (CASP) family. In terms of assembly, homodimer and heterodimers.

It localises to the cell membrane. In Marchantia polymorpha (Common liverwort), this protein is CASP-like protein 1U1.